A 545-amino-acid polypeptide reads, in one-letter code: ATP synthase subunit alpha (545 aa).

ATP is bound at residue 173–180 (GDRQTGKS).

It belongs to the ATPase alpha/beta chains family. In terms of assembly, F-type ATPases have 2 components, CF(1) - the catalytic core - and CF(0) - the membrane proton channel. CF(1) has five subunits: alpha(3), beta(3), gamma(1), delta(1), epsilon(1). CF(0) has three main subunits: a(1), b(2) and c(9-12). The alpha and beta chains form an alternating ring which encloses part of the gamma chain. CF(1) is attached to CF(0) by a central stalk formed by the gamma and epsilon chains, while a peripheral stalk is formed by the delta and b chains.

It is found in the cell membrane. It catalyses the reaction ATP + H2O + 4 H(+)(in) = ADP + phosphate + 5 H(+)(out). Produces ATP from ADP in the presence of a proton gradient across the membrane. The alpha chain is a regulatory subunit. The sequence is that of ATP synthase subunit alpha from Arthrobacter sp. (strain FB24).